The sequence spans 316 residues: Olfactory receptor 6B9 (316 aa).

Topologically, residues 1-22 (MENITNISEFILMGFPTAPWLQ) are extracellular. 2 N-linked (GlcNAc...) asparagine glycosylation sites follow: Asn3 and Asn6. Residues 23-43 (ILLFSIFFITYVFVLLENLVI) traverse the membrane as a helical segment. Residues 44–64 (ILTVWVTGSLHKPMYYFLSTM) lie on the Cytoplasmic side of the membrane. A helical membrane pass occupies residues 65–85 (SFLEAWYISVTVPKMLAGFLF). At 86 to 97 (RPNTISFLGCMT) the chain is on the extracellular side. An intrachain disulfide couples Cys95 to Cys187. A helical transmembrane segment spans residues 98-118 (QLYFFMSLACTECVLLAAMAY). The Cytoplasmic portion of the chain corresponds to 119–132 (DRYVAICWPLRYPV). The helical transmembrane segment at 133–153 (MMTTGFCVQLTISSWVSGFTI) threads the bilayer. The Extracellular segment spans residues 154–199 (SMAKVYFISRVAFCGNNVLNHFFCDVSPILKLACMNLSMAETVDFA). The helical transmembrane segment at 200 to 220 (LAIVILIFPLSATVLSYGFIV) threads the bilayer. Over 221-237 (STVLQIPSATGQRKAFS) the chain is Cytoplasmic. Residues 238-258 (TCASHLTVVVIFYTAVIFMYV) traverse the membrane as a helical segment. Residues 259–269 (RPRAIASFNSN) lie on the Extracellular side of the membrane. Residues 270–290 (KLISAIYAVFTPMLNPIIYCL) traverse the membrane as a helical segment. Residues 291–316 (RNKEVKDAIRKTIAGGRAPALGESIS) lie on the Cytoplasmic side of the membrane.

It belongs to the G-protein coupled receptor 1 family. Olfactory epithelium.

It localises to the cell membrane. In terms of biological role, odorant receptor. The polypeptide is Olfactory receptor 6B9 (Mus musculus (Mouse)).